A 962-amino-acid polypeptide reads, in one-letter code: Glycine dehydrogenase (decarboxylating) (962 aa).

The residue at position 709 (Lys-709) is an N6-(pyridoxal phosphate)lysine.

This sequence belongs to the GcvP family. In terms of assembly, the glycine cleavage system is composed of four proteins: P, T, L and H. Pyridoxal 5'-phosphate serves as cofactor.

The enzyme catalyses N(6)-[(R)-lipoyl]-L-lysyl-[glycine-cleavage complex H protein] + glycine + H(+) = N(6)-[(R)-S(8)-aminomethyldihydrolipoyl]-L-lysyl-[glycine-cleavage complex H protein] + CO2. In terms of biological role, the glycine cleavage system catalyzes the degradation of glycine. The P protein binds the alpha-amino group of glycine through its pyridoxal phosphate cofactor; CO(2) is released and the remaining methylamine moiety is then transferred to the lipoamide cofactor of the H protein. In Shewanella frigidimarina (strain NCIMB 400), this protein is Glycine dehydrogenase (decarboxylating).